A 268-amino-acid polypeptide reads, in one-letter code: Sterol uptake protein 2 (268 aa).

It belongs to the SUT1 family.

It localises to the nucleus. Its function is as follows. Putative transcription factor involved in the regulation of the activity of the cAMP/protein kinase A pathway. Involved in sterol uptake. With SUT1, positively regulates mating by repressing the expression of the mating inhibitors NCE102, PRR2 and RHO5 in response to pheromone. In Saccharomyces cerevisiae (strain ATCC 204508 / S288c) (Baker's yeast), this protein is Sterol uptake protein 2.